The primary structure comprises 82 residues: Pigment-dispersing hormone peptides (82 aa).

The signal sequence occupies residues 1-26 (MIGKYLSWFMLAFLFGFVLESYRVQS). An Alanine amide modification is found at A80.

It belongs to the arthropod PDH family. In terms of tissue distribution, expressed strongly in the head and weakly in the ventral nerve cord. Not detected in the midgut cecum or hindgut. In the cephalic neural complex, specifically localized to cells within the optic lobe, anteromedian protocerebrum, accessory lobe, tritocerebrum, and subesophageal ganglion.

The protein resides in the secreted. In terms of biological role, the pigment-dispersing hormone causes the migration of the distal retinal pigment into the proximal end of the pigment chromatophore cells and thus decreases the amount of light entering the retinulas. May also function as a neurotransmitter and/or neuromodulator. This is Pigment-dispersing hormone peptides from Armadillidium vulgare (Pillbug).